We begin with the raw amino-acid sequence, 332 residues long: Aspartate carbamoyltransferase catalytic subunit (332 aa).

Residues 1-20 (MPNTHDTKNNVSPSEYAKFD) are disordered. Arginine 72 and threonine 73 together coordinate carbamoyl phosphate. Lysine 100 is an L-aspartate binding site. 3 residues coordinate carbamoyl phosphate: arginine 122, histidine 152, and glutamine 155. L-aspartate contacts are provided by arginine 186 and arginine 241. Carbamoyl phosphate is bound by residues glycine 282 and proline 283.

It belongs to the aspartate/ornithine carbamoyltransferase superfamily. ATCase family. Heterododecamer (2C3:3R2) of six catalytic PyrB chains organized as two trimers (C3), and six regulatory PyrI chains organized as three dimers (R2).

The catalysed reaction is carbamoyl phosphate + L-aspartate = N-carbamoyl-L-aspartate + phosphate + H(+). Its pathway is pyrimidine metabolism; UMP biosynthesis via de novo pathway; (S)-dihydroorotate from bicarbonate: step 2/3. Its function is as follows. Catalyzes the condensation of carbamoyl phosphate and aspartate to form carbamoyl aspartate and inorganic phosphate, the committed step in the de novo pyrimidine nucleotide biosynthesis pathway. The polypeptide is Aspartate carbamoyltransferase catalytic subunit (Psychrobacter sp. (strain TAD1)).